Reading from the N-terminus, the 638-residue chain is Probable beta-glucosidase C (638 aa).

The first 18 residues, 1–18, serve as a signal peptide directing secretion; it reads MKVLAPGYLAEASLTALA. 5 N-linked (GlcNAc...) asparagine glycosylation sites follow: N40, N94, N116, N223, and N274. Residue D341 is part of the active site. N364, N480, N488, and N528 each carry an N-linked (GlcNAc...) asparagine glycan.

The protein belongs to the glycosyl hydrolase 3 family.

The protein localises to the secreted. It carries out the reaction Hydrolysis of terminal, non-reducing beta-D-glucosyl residues with release of beta-D-glucose.. Its pathway is glycan metabolism; cellulose degradation. Its function is as follows. Beta-glucosidases are one of a number of cellulolytic enzymes involved in the degradation of cellulosic biomass. Catalyzes the last step releasing glucose from the inhibitory cellobiose. In Aspergillus oryzae (strain ATCC 42149 / RIB 40) (Yellow koji mold), this protein is Probable beta-glucosidase C (bglC).